The chain runs to 383 residues: L-lactate dehydrogenase (383 aa).

The FMN hydroxy acid dehydrogenase domain occupies 1–380 (MIISSGNDYR…NTDCLVQAIK (380 aa)). Tyr24 is a substrate binding site. The FMN site is built by Ser106 and Gln127. Tyr129 contacts substrate. Thr155 is an FMN binding site. Substrate is bound at residue Arg164. Position 251 (Lys251) interacts with FMN. The active-site Proton acceptor is the His275. Arg278 lines the substrate pocket. An FMN-binding site is contributed by 306 to 330 (DSGIRNGLDVVRMLALGADTVLLGR).

This sequence belongs to the FMN-dependent alpha-hydroxy acid dehydrogenase family. The cofactor is FMN.

Its subcellular location is the cell inner membrane. The enzyme catalyses (S)-lactate + A = pyruvate + AH2. Functionally, catalyzes the conversion of L-lactate to pyruvate. Is coupled to the respiratory chain. This chain is L-lactate dehydrogenase, found in Acinetobacter baumannii (strain SDF).